Here is a 1189-residue protein sequence, read N- to C-terminus: Origin recognition complex subunit 1 (1189 aa).

The tract at residues 1-53 (MTPKKKIFQNFQANDNEILSPTKKGIKLNVSKLNILNFENTIITKEKTNYEYK) is required for peripherial nuclear localization. A Phosphothreonine modification is found at T2. At S20 the chain carries Phosphoserine. 4 Leucine heptad repeat repeats span residues 137-143 (LTNISSS), 144-150 (LTNISSS), 151-157 (LTNISSS), and 158-164 (LSNSLDE). Residues 239–248 (KKNISKKNTH) show a composition bias toward basic residues. 2 disordered regions span residues 239 to 421 (KKNI…DHTD) and 679 to 749 (DTQA…QSSL). The span at 254–279 (QNDKNKEKNKEKDKNIKKDRDKDIQT) shows a compositional bias: basic and acidic residues. Over residues 304 to 320 (NNDNVKNNLKNNINNNN) the composition is skewed to low complexity. Residues 321–339 (TLKRSSQSVRIDSDLSSAH) are compositionally biased toward polar residues. Residues 353 to 381 (HRNNNNNNNNNNKTTSNNHNKNNKINNNN) show a composition bias toward low complexity. The span at 385–394 (NYKKQTDTKH) shows a compositional bias: basic and acidic residues. The span at 395–411 (TNNTQNNKYNKTKTTNT) shows a compositional bias: low complexity. Polar residues predominate over residues 695-709 (KAQTTTNVKANTHTK). 2 stretches are compositionally biased toward basic and acidic residues: residues 710–724 (TLNDHNKSKTTKNKE) and 733–742 (DVKKKSDPHN). Residues V780 and 815 to 823 (GMPGTGKTA) contribute to the ATP site. 2 residues coordinate Mg(2+): D903 and E904. E904 serves as a coordination point for ATP. Positions 913–922 (QKVLFTLFDW) match the PIP-box motif. ATP contacts are provided by N937 and R1003.

It belongs to the ORC1 family. Component of the origin recognition complex (ORC). Interacts (via PIP-box) with PCNA1; the interaction occurs during DNA replication in trophozoites. In schizonts, may be phosphorylated by PK5; phosphorylation leads to ORC1 dissociation from the telomeres and var gene promoters, translocation to the cytoplasm, where it is degraded by the proteasome.

Its subcellular location is the nucleus. The protein localises to the chromosome. It is found in the telomere. It localises to the nucleolus. The catalysed reaction is ATP + H2O = ADP + phosphate + H(+). Functionally, component of the origin recognition complex (ORC) that binds origins of replication and thus may regulate the initiation of DNA replication. DNA-binding may not be ATP-dependent. In a SIR2A/Sir2-dependent manner, binds to and silences telomers and subtelomeric repeat regions (TAREs). In a SIR2A/Sir2-dependent manner, binds to promoters of var genes localized next to TAREs resulting in their silencing. The polypeptide is Origin recognition complex subunit 1 (Plasmodium falciparum (isolate 3D7)).